The following is a 149-amino-acid chain: Probable ubiquitin-conjugating enzyme E2 12 (149 aa).

The span at 1 to 15 (MASKRISRELRDMQR) shows a compositional bias: basic and acidic residues. Residues 1-22 (MASKRISRELRDMQRHPPANCS) are disordered. One can recognise a UBC core domain in the interval 1–148 (MASKRISREL…AQKWTQKYAM (148 aa)). The active-site Glycyl thioester intermediate is cysteine 86.

The protein belongs to the ubiquitin-conjugating enzyme family. Ubiquitously expressed at very low levels.

The enzyme catalyses S-ubiquitinyl-[E1 ubiquitin-activating enzyme]-L-cysteine + [E2 ubiquitin-conjugating enzyme]-L-cysteine = [E1 ubiquitin-activating enzyme]-L-cysteine + S-ubiquitinyl-[E2 ubiquitin-conjugating enzyme]-L-cysteine.. The protein operates within protein modification; protein ubiquitination. In terms of biological role, accepts the ubiquitin from the E1 complex and catalyzes its covalent attachment to other proteins. The polypeptide is Probable ubiquitin-conjugating enzyme E2 12 (UBC12) (Arabidopsis thaliana (Mouse-ear cress)).